Here is a 119-residue protein sequence, read N- to C-terminus: Large ribosomal subunit protein bL20 (119 aa).

This sequence belongs to the bacterial ribosomal protein bL20 family.

In terms of biological role, binds directly to 23S ribosomal RNA and is necessary for the in vitro assembly process of the 50S ribosomal subunit. It is not involved in the protein synthesizing functions of that subunit. In Clostridium novyi (strain NT), this protein is Large ribosomal subunit protein bL20.